We begin with the raw amino-acid sequence, 498 residues long: Lycopene beta cyclase, chloroplastic/chromoplastic (498 aa).

The N-terminal 79 residues, 1–79 (MDTLLRTPNN…ELPMYDPSKG (79 aa)), are a transit peptide targeting the chloroplast and chromoplast. 84–112 (LAVVGGGPAGLAVAQQVSEAGLSVCSIDP) contacts NAD(+). The short motif at 293–297 (FLEET) is the FLEET motif element.

The protein belongs to the lycopene cyclase family. As to quaternary structure, monomer. It depends on FAD as a cofactor. NADPH serves as cofactor.

It is found in the plastid. It localises to the chloroplast. The protein resides in the chromoplast. It catalyses the reaction a carotenoid psi-end group = a carotenoid beta-end derivative. The enzyme catalyses all-trans-lycopene = gamma-carotene. It carries out the reaction gamma-carotene = all-trans-beta-carotene. The catalysed reaction is all-trans-neurosporene = beta-zeacarotene. It catalyses the reaction beta-zeacarotene = 7,8-dihydro-beta-carotene. It functions in the pathway carotenoid biosynthesis; beta-carotene biosynthesis. The protein operates within carotenoid biosynthesis; beta-zeacarotene biosynthesis. In terms of biological role, catalyzes the double cyclization reaction which converts lycopene to beta-carotene. Catalyzes the double cyclization reaction which converts neurosporene to 7,8-dihydro-beta-carotene. The sequence is that of Lycopene beta cyclase, chloroplastic/chromoplastic from Capsicum annuum (Capsicum pepper).